Consider the following 585-residue polypeptide: uncharacterized protein (585 aa).

The protein to E.coli YejM.

This is an uncharacterized protein from Haemophilus influenzae (strain ATCC 51907 / DSM 11121 / KW20 / Rd).